Reading from the N-terminus, the 188-residue chain is dCTP deaminase (188 aa).

DCTP contacts are provided by residues 111-116 (KSTYAR), 135-137 (TLE), Q156, Y170, and Q180. E137 (proton donor/acceptor) is an active-site residue.

This sequence belongs to the dCTP deaminase family. In terms of assembly, homotrimer.

The enzyme catalyses dCTP + H2O + H(+) = dUTP + NH4(+). Its pathway is pyrimidine metabolism; dUMP biosynthesis; dUMP from dCTP (dUTP route): step 1/2. In terms of biological role, catalyzes the deamination of dCTP to dUTP. This Janthinobacterium sp. (strain Marseille) (Minibacterium massiliensis) protein is dCTP deaminase.